The sequence spans 427 residues: Histidinol dehydrogenase (427 aa).

Residues Tyr-125, Gln-186, and Asn-209 each coordinate NAD(+). Substrate contacts are provided by Ser-234, Gln-256, and His-259. Gln-256 and His-259 together coordinate Zn(2+). Catalysis depends on proton acceptor residues Glu-325 and His-326. Residues His-326, Asp-359, Glu-413, and His-419 each coordinate substrate. Asp-359 is a Zn(2+) binding site. His-419 lines the Zn(2+) pocket.

It belongs to the histidinol dehydrogenase family. Requires Zn(2+) as cofactor.

The enzyme catalyses L-histidinol + 2 NAD(+) + H2O = L-histidine + 2 NADH + 3 H(+). It participates in amino-acid biosynthesis; L-histidine biosynthesis; L-histidine from 5-phospho-alpha-D-ribose 1-diphosphate: step 9/9. Functionally, catalyzes the sequential NAD-dependent oxidations of L-histidinol to L-histidinaldehyde and then to L-histidine. The protein is Histidinol dehydrogenase of Leptospira interrogans serogroup Icterohaemorrhagiae serovar Lai (strain 56601).